The primary structure comprises 446 residues: N-succinylarginine dihydrolase (446 aa).

Substrate contacts are provided by residues 19-28 (AGLSFGNVAS), Asn-110, and 137-138 (HR). Residue Glu-174 is part of the active site. Substrate is bound at residue Arg-213. The active site involves His-249. Asp-251 and Asn-364 together coordinate substrate. The active-site Nucleophile is Cys-370.

Belongs to the succinylarginine dihydrolase family. Homodimer.

It catalyses the reaction N(2)-succinyl-L-arginine + 2 H2O + 2 H(+) = N(2)-succinyl-L-ornithine + 2 NH4(+) + CO2. It functions in the pathway amino-acid degradation; L-arginine degradation via AST pathway; L-glutamate and succinate from L-arginine: step 2/5. Functionally, catalyzes the hydrolysis of N(2)-succinylarginine into N(2)-succinylornithine, ammonia and CO(2). This Burkholderia orbicola (strain MC0-3) protein is N-succinylarginine dihydrolase.